Here is a 154-residue protein sequence, read N- to C-terminus: 3-dehydroquinate dehydratase (154 aa).

Catalysis depends on Tyr-26, which acts as the Proton acceptor. Residues Asn-77, His-83, and Asp-90 each contribute to the substrate site. His-103 serves as the catalytic Proton donor. Residues 104 to 105 (IS) and Arg-114 each bind substrate.

It belongs to the type-II 3-dehydroquinase family. In terms of assembly, homododecamer.

The catalysed reaction is 3-dehydroquinate = 3-dehydroshikimate + H2O. Its pathway is metabolic intermediate biosynthesis; chorismate biosynthesis; chorismate from D-erythrose 4-phosphate and phosphoenolpyruvate: step 3/7. Functionally, catalyzes a trans-dehydration via an enolate intermediate. This chain is 3-dehydroquinate dehydratase, found in Buchnera aphidicola subsp. Baizongia pistaciae (strain Bp).